We begin with the raw amino-acid sequence, 496 residues long: RNA-binding motif protein, Y chromosome, family 1 member E (496 aa).

The region spanning 8–85 is the RRM domain; it reads GKLFIGGLNR…KAIKVEQAKK (78 aa). Disordered stretches follow at residues 67 to 348 and 453 to 496; these read DMNG…PHRD and DQRN…SSRY. Composition is skewed to low complexity over residues 97 to 114 and 149 to 159; these read PASSRNRSPSGSLRSARG and PVKRGPSSRSG. The span at 175–184 shows a compositional bias: polar residues; sequence NSWMGSQGPM. 6 stretches are compositionally biased toward basic and acidic residues: residues 204 to 214, 242 to 253, 276 to 289, 313 to 326, 335 to 348, and 484 to 496; these read RNDRMSTRHDG, DNGHSNRDEHSS, AYRDYGHSRRDESY, GYRDYGHSRRHESY, SSRETRDYAPPHRD, and GESRSEKGDSSRY.

Interacts with splicing factor proteins SFRS3/SRP20, TRA2B/SFRS10, KHDRBS1/SAM68 and KHDRBS3. In terms of tissue distribution, testis-specific.

Its subcellular location is the nucleus. Its function is as follows. RNA-binding protein which may be involved in spermatogenesis. Required for sperm development, possibly by participating in pre-mRNA splicing in the testis. This is RNA-binding motif protein, Y chromosome, family 1 member E (RBMY1E) from Homo sapiens (Human).